A 320-amino-acid chain; its full sequence is Aspartate carbamoyltransferase catalytic subunit (320 aa).

Arg-68 and Thr-69 together coordinate carbamoyl phosphate. An L-aspartate-binding site is contributed by Lys-96. The carbamoyl phosphate site is built by Arg-118, His-148, and Gln-151. Arg-181 and Arg-236 together coordinate L-aspartate. Positions 277 and 278 each coordinate carbamoyl phosphate.

It belongs to the aspartate/ornithine carbamoyltransferase superfamily. ATCase family. Heterododecamer (2C3:3R2) of six catalytic PyrB chains organized as two trimers (C3), and six regulatory PyrI chains organized as three dimers (R2).

The catalysed reaction is carbamoyl phosphate + L-aspartate = N-carbamoyl-L-aspartate + phosphate + H(+). It functions in the pathway pyrimidine metabolism; UMP biosynthesis via de novo pathway; (S)-dihydroorotate from bicarbonate: step 2/3. Its function is as follows. Catalyzes the condensation of carbamoyl phosphate and aspartate to form carbamoyl aspartate and inorganic phosphate, the committed step in the de novo pyrimidine nucleotide biosynthesis pathway. The protein is Aspartate carbamoyltransferase catalytic subunit of Leptothrix cholodnii (strain ATCC 51168 / LMG 8142 / SP-6) (Leptothrix discophora (strain SP-6)).